A 796-amino-acid chain; its full sequence is MPTTQQSPQDEQEKLLDEAIQAVKVQSFQMKRCLDKNKLMDALKHASNMLGELRTSMLSPKSYYELYMAISDELHYLEVYLTDEFAKGRKVADLYELVQYAGNIIPRLYLLITVGVVYVKSFPQSRKDILKDLVEMCRGVQHPLRGLFLRNYLLQCTRNILPDEGEPTDEETTGDISDSMDFVLLNFAEMNKLWVRMQHQGHSRDREKRERERQELRILVGTNLVRLSQLEGVNVERYKQIVLTGILEQVVNCRDALAQEYLMECIIQVFPDEFHLQTLNPFLRACAELHQNVNVKNIIIALIDRLALFAHREDGPGIPAEIKLFDIFSQQVATVIQSRQDMPSEDVVSLQVSLINLAMKCYPDRVDYVDKVLETTVEIFNKLNLEHIATSSAVSKELTRLLKIPVDTYNNILTVLKLKHFHPLFEYFDYESRKSMSCYVLSNVLDYNTEIVSQDQVDSIMNLVSTLIQDQPDQPVEDPDPEDFADEQSLVGRFIHLLRSDDPDQQYLILNTARKHFGAGGNQRIRFTLPPLVFAAYQLAFRYKENSQMDDKWEKKCQKIFSFAHQTISALIKAELAELPLRLFLQGALAAGEIGFENHETVAYEFMSQAFSLYEDEISDSKAQLAAITLIIGTFERMKCFSEENHEPLRTQCALAASKLLKKPDQGRAVSTCAHLFWSGRNTDKNGEELHGGKRVMECLKKALKIANQCMDPSLQVQLFIEILNRYIYFYEKENDAVTIQVLNQLIQKIREDLPNLESSEETEQINKHFHNTLEHLRSRRESPESEGPIYEGLIL.

Ser-7 is modified (phosphoserine). 2 interaction with SNX3 regions span residues 25-44 (VQSF…DALK) and 205-215 (DREKRERERQE). The segment at 438 to 796 (CYVLSNVLDY…EGPIYEGLIL (359 aa)) is interaction with SLC11A2. An interaction with IGF2R cytoplasmic domain region spans residues 500 to 693 (SDDPDQQYLI…DKNGEELHGG (194 aa)). A disordered region spans residues 776–796 (HLRSRRESPESEGPIYEGLIL). Ser-783 bears the Phosphoserine mark. Position 791 is a phosphotyrosine (Tyr-791).

Belongs to the VPS35 family. Component of the heterotrimeric retromer cargo-selective complex (CSC), also described as vacuolar protein sorting subcomplex (VPS) formed by VPS26 (VPS26A or VPS26B), VPS29 and VPS35. The CSC has a highly elongated structure with VPS26 and VPS29 binding independently at opposite distal ends of VPS35 as central platform. The CSC is believed to associate with variable sorting nexins to form functionally distinct retromer complex variants. The originally described retromer complex (also called SNX-BAR retromer) is a pentamer containing the CSC and a heterodimeric membrane-deforming subcomplex formed between SNX1 or SNX2 and SNX5 or SNX6 (also called SNX-BAR subcomplex); the affinity between the respective CSC and SNX-BAR subcomplexes is low. The CSC associates with SNX3 to form a SNX3-retromer complex. The CSC associates with SNX27, the WASH complex and the SNX-BAR subcomplex to form the SNX27-retromer complex. Interacts with VPS26A, VPS29, VPS26B and LRRK2. Interacts with SNX1, SNX2, IGF2R, SNX3, GOLPH3, SLC11A2, WASHC2, FKBP15, WASHC1, EHD1. Interacts with MAGEL2; leading to recruitment of the TRIM27:MAGEL2 E3 ubiquitin ligase complex retromer-containing endosomes. Interacts with SORCS2. In terms of tissue distribution, detected in striatum (at protein level). Ubiquitous. Highly expressed in fat tissue, testis, brain, kidney, thymus, liver and pancreas, and at lower levels in heart, intestine and skeletal muscle. Detected in oocytes, pre-implantation embryos and at 6.5-12.5 dpc.

It localises to the cytoplasm. The protein localises to the membrane. Its subcellular location is the endosome. The protein resides in the early endosome. It is found in the late endosome. In terms of biological role, acts as a component of the retromer cargo-selective complex (CSC). The CSC is believed to be the core functional component of retromer or respective retromer complex variants acting to prevent missorting of selected transmembrane cargo proteins into the lysosomal degradation pathway. The recruitment of the CSC to the endosomal membrane involves RAB7A and SNX3. The CSC seems to associate with the cytoplasmic domain of cargo proteins predominantly via VPS35; however, these interactions seem to be of low affinity and retromer SNX proteins may also contribute to cargo selectivity thus questioning the classical function of the CSC. The SNX-BAR retromer mediates retrograde transport of cargo proteins from endosomes to the trans-Golgi network (TGN) and is involved in endosome-to-plasma membrane transport for cargo protein recycling. The SNX3-retromer mediates the retrograde transport of WLS distinct from the SNX-BAR retromer pathway. The SNX27-retromer is believed to be involved in endosome-to-plasma membrane trafficking and recycling of a broad spectrum of cargo proteins. The CSC seems to act as recruitment hub for other proteins, such as the WASH complex and TBC1D5. Required for retrograde transport of lysosomal enzyme receptor IGF2R and SLC11A2. Required to regulate transcytosis of the polymeric immunoglobulin receptor (pIgR-pIgA). Required for endosomal localization of WASHC2 and mediates the association of the CSC with the WASH complex. This is Vacuolar protein sorting-associated protein 35 (Vps35) from Mus musculus (Mouse).